A 430-amino-acid chain; its full sequence is CinA-like protein (430 aa).

The protein belongs to the CinA family.

This is CinA-like protein from Prochlorococcus marinus (strain NATL1A).